The sequence spans 559 residues: (R)-mandelonitrile lyase 1 (559 aa).

Residues 1-27 form the signal peptide; it reads MEKSTMSVILFVLHLLVLHLQYSEVHS. N30 and N44 each carry an N-linked (GlcNAc...) asparagine glycan. FAD-binding positions include 63-64, 82-83, T133, and 137-140; these read TS, ER, and NAGV. Residues N145, N162, N178, and N218 are each glycosylated (N-linked (GlcNAc...) asparagine). V244 contributes to the FAD binding site. 7 N-linked (GlcNAc...) asparagine glycosylation sites follow: N252, N255, N309, N380, N402, N420, and N467. C427 and C478 are disulfide-bonded. Y485 contributes to the substrate binding site. 486–487 contributes to the FAD binding site; sequence WH. Residue H487 is the Proton donor of the active site. H525 serves as the catalytic Proton acceptor. 526–527 contacts FAD; sequence PQ.

It belongs to the GMC oxidoreductase family. As to quaternary structure, monomer. Requires FAD as cofactor.

The enzyme catalyses (R)-mandelonitrile = benzaldehyde + hydrogen cyanide. In terms of biological role, involved in cyanogenesis, the release of HCN from injured tissues. Catalyzes the stereospecific addition of HCN to a variety of aldehydes in vitro. It is a major seed constituent, and could have the additional role of a storage form for reduced nitrogen. The chain is (R)-mandelonitrile lyase 1 (MDL1) from Prunus dulcis (Almond).